A 152-amino-acid polypeptide reads, in one-letter code: UPF0225 protein YchJ (152 aa).

The protein belongs to the UPF0225 family.

In Escherichia coli O7:K1 (strain IAI39 / ExPEC), this protein is UPF0225 protein YchJ.